The chain runs to 103 residues: Iron-sulfur cluster assembly protein CyaY (103 aa).

This sequence belongs to the frataxin family.

Its function is as follows. Involved in iron-sulfur (Fe-S) cluster assembly. May act as a regulator of Fe-S biogenesis. In Rickettsia rickettsii (strain Iowa), this protein is Iron-sulfur cluster assembly protein CyaY.